The sequence spans 134 residues: MGRDTIAEIITSIRNADMDRKRVVRIASTNITENIVQILLREGFIENVRKHREKNKYFLVLTLRHRRNRKRPYRNILNLKRISRPGLRIYSNYQRIPRILGGMGIVILSTSRGIMTDREARLEGIGGEILCYIW.

The protein belongs to the universal ribosomal protein uS8 family. Part of the 30S ribosomal subunit.

It localises to the plastid. It is found in the chloroplast. Its function is as follows. One of the primary rRNA binding proteins, it binds directly to 16S rRNA central domain where it helps coordinate assembly of the platform of the 30S subunit. This is Small ribosomal subunit protein uS8c (rps8) from Nicotiana tabacum (Common tobacco).